The sequence spans 672 residues: DNA ligase (672 aa).

NAD(+) is bound by residues 35–39 (DAEYD), 84–85 (SL), and glutamate 116. The active-site N6-AMP-lysine intermediate is the lysine 118. NAD(+) contacts are provided by arginine 139, glutamate 179, lysine 295, and lysine 319. Zn(2+)-binding residues include cysteine 413, cysteine 416, cysteine 431, and cysteine 436. Positions 593-672 (PRSAPLTGKT…EEFLRLAGKI (80 aa)) constitute a BRCT domain.

It belongs to the NAD-dependent DNA ligase family. LigA subfamily. Mg(2+) is required as a cofactor. The cofactor is Mn(2+).

It catalyses the reaction NAD(+) + (deoxyribonucleotide)n-3'-hydroxyl + 5'-phospho-(deoxyribonucleotide)m = (deoxyribonucleotide)n+m + AMP + beta-nicotinamide D-nucleotide.. In terms of biological role, DNA ligase that catalyzes the formation of phosphodiester linkages between 5'-phosphoryl and 3'-hydroxyl groups in double-stranded DNA using NAD as a coenzyme and as the energy source for the reaction. It is essential for DNA replication and repair of damaged DNA. In Syntrophus aciditrophicus (strain SB), this protein is DNA ligase.